The chain runs to 190 residues: NADH-ubiquinone oxidoreductase 75 kDa subunit, mitochondrial (190 aa).

The protein belongs to the complex I 75 kDa subunit family. As to quaternary structure, core subunit of respiratory chain NADH dehydrogenase (Complex I) which is composed of 45 different subunits. This is the largest subunit of complex I and it is a component of the iron-sulfur (IP) fragment of the enzyme. Complex I associates with ubiquinol-cytochrome reductase complex (Complex III) to form supercomplexes. Interacts with MDM2 and AKAP1. The cofactor is [2Fe-2S] cluster. It depends on [4Fe-4S] cluster as a cofactor.

The protein localises to the mitochondrion inner membrane. The enzyme catalyses a ubiquinone + NADH + 5 H(+)(in) = a ubiquinol + NAD(+) + 4 H(+)(out). Core subunit of the mitochondrial membrane respiratory chain NADH dehydrogenase (Complex I) which catalyzes electron transfer from NADH through the respiratory chain, using ubiquinone as an electron acceptor. Essential for catalysing the entry and efficient transfer of electrons within complex I. Plays a key role in the assembly and stability of complex I and participates in the association of complex I with ubiquinol-cytochrome reductase complex (Complex III) to form supercomplexes. In Mesocricetus auratus (Golden hamster), this protein is NADH-ubiquinone oxidoreductase 75 kDa subunit, mitochondrial.